A 335-amino-acid polypeptide reads, in one-letter code: 5-formaminoimidazole-4-carboxamide-1-(beta)-D-ribofuranosyl 5'-monophosphate synthetase (335 aa).

5-amino-1-(5-phospho-beta-D-ribosyl)imidazole-4-carboxamide contacts are provided by His-21 and Ser-86. The ATP-grasp domain occupies 107–315 (RELLRWEADQ…YFDKPMDMGE (209 aa)). Residues 137 to 189 (PTEV…VPAY) and Glu-211 each bind ATP. 5-amino-1-(5-phospho-beta-D-ribosyl)imidazole-4-carboxamide is bound at residue Asn-231. Residues Glu-270 and Glu-283 each coordinate Mg(2+).

The protein belongs to the phosphohexose mutase family. Requires Mg(2+) as cofactor. The cofactor is Mn(2+).

The enzyme catalyses 5-amino-1-(5-phospho-beta-D-ribosyl)imidazole-4-carboxamide + formate + ATP = 5-formamido-1-(5-phospho-D-ribosyl)imidazole-4-carboxamide + ADP + phosphate. It functions in the pathway purine metabolism; IMP biosynthesis via de novo pathway; 5-formamido-1-(5-phospho-D-ribosyl)imidazole-4-carboxamide from 5-amino-1-(5-phospho-D-ribosyl)imidazole-4-carboxamide (formate route): step 1/1. Catalyzes the ATP- and formate-dependent formylation of 5-aminoimidazole-4-carboxamide-1-beta-d-ribofuranosyl 5'-monophosphate (AICAR) to 5-formaminoimidazole-4-carboxamide-1-beta-d-ribofuranosyl 5'-monophosphate (FAICAR) in the absence of folates. In Pyrobaculum arsenaticum (strain DSM 13514 / JCM 11321 / PZ6), this protein is 5-formaminoimidazole-4-carboxamide-1-(beta)-D-ribofuranosyl 5'-monophosphate synthetase.